A 358-amino-acid chain; its full sequence is F-box/kelch-repeat protein SKIP4 (358 aa).

Positions Ala20–Glu67 constitute an F-box domain. 6 Kelch repeats span residues Leu78 to Lys122, Arg123 to Gly171, Ile173 to Gly219, Arg220 to Gln269, Phe271 to Asn307, and Ser308 to Ser355.

In terms of assembly, part of a SCF (SKP1-cullin-F-box) protein ligase complex. Interacts with SKP1A/ASK1.

Its pathway is protein modification; protein ubiquitination. In Arabidopsis thaliana (Mouse-ear cress), this protein is F-box/kelch-repeat protein SKIP4 (SKIP4).